The chain runs to 90 residues: Putative UPF0401 protein YpjI (90 aa).

Belongs to the UPF0401 family.

In Escherichia coli (strain K12), this protein is Putative UPF0401 protein YpjI (ypjI).